Consider the following 205-residue polypeptide: Protein N-terminal glutamine amidohydrolase (205 aa).

Active-site residues include cysteine 20, histidine 74, and aspartate 90.

The protein belongs to the NTAQ1 family. As to quaternary structure, monomer.

It catalyses the reaction N-terminal L-glutaminyl-[protein] + H2O = N-terminal L-glutamyl-[protein] + NH4(+). Mediates the side-chain deamidation of N-terminal glutamine residues to glutamate, an important step in N-end rule pathway of protein degradation. Conversion of the resulting N-terminal glutamine to glutamate renders the protein susceptible to arginylation, polyubiquitination and degradation as specified by the N-end rule. Does not act on substrates with internal or C-terminal glutamine and does not act on non-glutamine residues in any position. The sequence is that of Protein N-terminal glutamine amidohydrolase (tun) from Drosophila virilis (Fruit fly).